Consider the following 511-residue polypeptide: Bifunctional purine biosynthesis protein PurH (511 aa).

The MGS-like domain maps to 1–145 (MKRRAIISVS…KNHAYVTAVV (145 aa)).

The protein belongs to the PurH family.

The enzyme catalyses (6R)-10-formyltetrahydrofolate + 5-amino-1-(5-phospho-beta-D-ribosyl)imidazole-4-carboxamide = 5-formamido-1-(5-phospho-D-ribosyl)imidazole-4-carboxamide + (6S)-5,6,7,8-tetrahydrofolate. It catalyses the reaction IMP + H2O = 5-formamido-1-(5-phospho-D-ribosyl)imidazole-4-carboxamide. It participates in purine metabolism; IMP biosynthesis via de novo pathway; 5-formamido-1-(5-phospho-D-ribosyl)imidazole-4-carboxamide from 5-amino-1-(5-phospho-D-ribosyl)imidazole-4-carboxamide (10-formyl THF route): step 1/1. Its pathway is purine metabolism; IMP biosynthesis via de novo pathway; IMP from 5-formamido-1-(5-phospho-D-ribosyl)imidazole-4-carboxamide: step 1/1. The protein is Bifunctional purine biosynthesis protein PurH of Anoxybacillus flavithermus (strain DSM 21510 / WK1).